The chain runs to 443 residues: Anamorsin homolog (443 aa).

Residues 136–301 (LSSAPRVLVL…AAGVADALSG (166 aa)) are N-terminal SAM-like domain. Residues 302-331 (NRGALPNGTAQTDGDDFIDESTLIDPTESY) are linker. Cys-341, Cys-348, Cys-351, and Cys-353 together coordinate [2Fe-2S] cluster. A fe-S binding site A region spans residues 341-353 (CASRPKACPNCTC). Residues Cys-380, Cys-383, Cys-391, and Cys-394 each contribute to the [4Fe-4S] cluster site. Short sequence motifs (cx2C motif) lie at residues 380–383 (CGNC) and 391–394 (CAGC). The tract at residues 380–394 (CGNCYLGDAFRCAGC) is fe-S binding site B.

The protein belongs to the anamorsin family. As to quaternary structure, monomer. [2Fe-2S] cluster is required as a cofactor. The cofactor is [4Fe-4S] cluster.

It is found in the cytoplasm. The protein resides in the mitochondrion intermembrane space. Functionally, component of the cytosolic iron-sulfur (Fe-S) protein assembly (CIA) machinery. Required for the maturation of extramitochondrial Fe-S proteins. Part of an electron transfer chain functioning in an early step of cytosolic Fe-S biogenesis, facilitating the de novo assembly of a [4Fe-4S] cluster on the cytosolic Fe-S scaffold complex. Electrons are transferred from NADPH via a FAD- and FMN-containing diflavin oxidoreductase. Together with the diflavin oxidoreductase, also required for the assembly of the diferric tyrosyl radical cofactor of ribonucleotide reductase (RNR), probably by providing electrons for reduction during radical cofactor maturation in the catalytic small subunit. This chain is Anamorsin homolog, found in Toxoplasma gondii (strain ATCC 50861 / VEG).